Consider the following 190-residue polypeptide: Voltage-dependent calcium channel gamma-like subunit (190 aa).

Helical transmembrane passes span 25-45 (FIRT…SVSI), 96-116 (ALAV…QLCE), 131-151 (LLVS…LLRN), and 155-175 (LIGF…LFLN).

The protein belongs to the PMP-22/EMP/MP20 family. CACNG subfamily. As to quaternary structure, the L-type calcium channel is composed of five subunits: alpha-1, alpha-2/delta, beta and gamma.

It is found in the membrane. Functionally, thought to stabilize the calcium channel in an inactivated (closed) state. Modulates calcium current when coexpressed with CACNA1G. The protein is Voltage-dependent calcium channel gamma-like subunit of Homo sapiens (Human).